The following is a 177-amino-acid chain: Translation initiation factor IF-3 (177 aa).

This sequence belongs to the IF-3 family. In terms of assembly, monomer.

It localises to the cytoplasm. In terms of biological role, IF-3 binds to the 30S ribosomal subunit and shifts the equilibrium between 70S ribosomes and their 50S and 30S subunits in favor of the free subunits, thus enhancing the availability of 30S subunits on which protein synthesis initiation begins. The polypeptide is Translation initiation factor IF-3 (Nostoc sp. (strain PCC 7120 / SAG 25.82 / UTEX 2576)).